A 236-amino-acid chain; its full sequence is MAEAVESPGDPGTTTPRPLFAGLSDISISQDIPVEGEITIPVRSRVREFDSSTLNESVQNTIMRDLKAVGKKFMHVLYPRKSNTLLRDWDLWGPLILCVTLALMLQRGSVDSEKDGGPQFAEVFVIVWFGAVTITLNSKLLGGNISFFQSLCVLGYCILPLTMAMLVCRLVLLAEPGPVNFMVRLFVVIIMFAWSIVASTAFLADSQPPNRKALAVYPVFLFYFVISWMILTFTPQ.

Ala-2 is modified (N-acetylalanine). The Cytoplasmic segment spans residues 2-84; sequence AEAVESPGDP…HVLYPRKSNT (83 aa). Ser-7 bears the Phosphoserine mark. Residues 85 to 105 form a helical membrane-spanning segment; that stretch reads LLRDWDLWGPLILCVTLALML. At 106-115 the chain is on the lumenal side; it reads QRGSVDSEKD. Residues 116–136 form a helical membrane-spanning segment; the sequence is GGPQFAEVFVIVWFGAVTITL. At 137–146 the chain is on the cytoplasmic side; sequence NSKLLGGNIS. A helical membrane pass occupies residues 147–167; sequence FFQSLCVLGYCILPLTMAMLV. The Lumenal portion of the chain corresponds to 168–184; the sequence is CRLVLLAEPGPVNFMVR. The chain crosses the membrane as a helical span at residues 185–205; it reads LFVVIIMFAWSIVASTAFLAD. The Cytoplasmic portion of the chain corresponds to 206–212; it reads SQPPNRK. The chain crosses the membrane as a helical span at residues 213-233; it reads ALAVYPVFLFYFVISWMILTF. The Lumenal segment spans residues 234–236; the sequence is TPQ.

The protein belongs to the YIP1 family. In terms of assembly, predominantly interacts with YIPF1 or YIPF2, but may also form a ternary complex with YIPF1 and YIPF2. This interaction may stabilize YIPF1 and YIPF2.

Its subcellular location is the golgi apparatus membrane. In terms of biological role, may be required for stable YIPF1 and YIPF2 protein expression. This Bos taurus (Bovine) protein is Protein YIPF6 (YIPF6).